The primary structure comprises 626 residues: UvrABC system protein C (626 aa).

The GIY-YIG domain occupies 25-104; the sequence is TSPGVYRFSN…IKELKPRYNV (80 aa). One can recognise a UVR domain in the interval 218-253; the sequence is SALLRDLSAEMQKKAKELKFEEAAALKAQIEGLKRY.

The protein belongs to the UvrC family. As to quaternary structure, interacts with UvrB in an incision complex.

The protein localises to the cytoplasm. In terms of biological role, the UvrABC repair system catalyzes the recognition and processing of DNA lesions. UvrC both incises the 5' and 3' sides of the lesion. The N-terminal half is responsible for the 3' incision and the C-terminal half is responsible for the 5' incision. The polypeptide is UvrABC system protein C (Chlorobaculum tepidum (strain ATCC 49652 / DSM 12025 / NBRC 103806 / TLS) (Chlorobium tepidum)).